Consider the following 357-residue polypeptide: MFVDNIKLKVKSGKGGQGCVSFRREKFVVKGGPDGGDGGKGGDVIVECDKNTHTLSHYKGRKLLKAKNGRPGEGRKKHGANGEDLILKVPPGTVIKNAETGEVLLDMKEDGERKVLLEGGRGGLGNWHFRGPRNQTPRYAQPGEEGQELEIVLELKLIADVGLVGFPNAGKSTLISTLSNARPEIANYEFTTLTPKLGVVRVDEYRSFVMADIPGIIEGAHEGKGLGIEFLKHIERTSTILYMIDLSSYRDPVYQFKTLQKELKEYSEKLASRDYAIALTKCDSVEVEKIEEFFEKLGISKTEPKFKADPNLPCHFDDKTFVLPISSVANINIEALKFALFDLVEKNKRKENEENSF.

Positions 1 to 158 (MFVDNIKLKV…LEIVLELKLI (158 aa)) constitute an Obg domain. The OBG-type G domain maps to 159–345 (ADVGLVGFPN…LKFALFDLVE (187 aa)). GTP is bound by residues 165-172 (GFPNAGKS), 190-194 (FTTLT), 212-215 (DIPG), 280-283 (TKCD), and 326-328 (SSV). Positions 172 and 192 each coordinate Mg(2+).

Belongs to the TRAFAC class OBG-HflX-like GTPase superfamily. OBG GTPase family. As to quaternary structure, monomer. Mg(2+) serves as cofactor.

The protein resides in the cytoplasm. Functionally, an essential GTPase which binds GTP, GDP and possibly (p)ppGpp with moderate affinity, with high nucleotide exchange rates and a fairly low GTP hydrolysis rate. Plays a role in control of the cell cycle, stress response, ribosome biogenesis and in those bacteria that undergo differentiation, in morphogenesis control. In Nautilia profundicola (strain ATCC BAA-1463 / DSM 18972 / AmH), this protein is GTPase Obg.